Consider the following 247-residue polypeptide: Fibroblast growth factor 14 (247 aa).

Disordered regions lie at residues 1–38 (MAAA…KNRG) and 216–247 (ETVP…CKTT). Positions 15-25 (QAREQHWDRPS) are enriched in basic and acidic residues.

It belongs to the heparin-binding growth factors family. Interacts with SCN8A.

It is found in the nucleus. Its function is as follows. Probably involved in nervous system development and function. The sequence is that of Fibroblast growth factor 14 (Fgf14) from Rattus norvegicus (Rat).